A 499-amino-acid chain; its full sequence is Ent-kaurenoic acid oxidase 1 (499 aa).

A helical transmembrane segment spans residues 5–25 (AWWAVAAVVAALAVVALDAAV). C443 is a binding site for heme.

Belongs to the cytochrome P450 family. Requires heme as cofactor.

The protein resides in the endoplasmic reticulum membrane. The catalysed reaction is ent-kaur-16-en-19-oate + 3 reduced [NADPH--hemoprotein reductase] + 3 O2 = gibberellin A12 + 3 oxidized [NADPH--hemoprotein reductase] + 4 H2O + 4 H(+). It carries out the reaction ent-kaur-16-en-19-oate + reduced [NADPH--hemoprotein reductase] + O2 = ent-7alpha-hydroxykaur-16-en-19-oate + oxidized [NADPH--hemoprotein reductase] + H2O + H(+). The enzyme catalyses ent-7alpha-hydroxykaur-16-en-19-oate + reduced [NADPH--hemoprotein reductase] + O2 = gibberellin A12 aldehyde + oxidized [NADPH--hemoprotein reductase] + 2 H2O + H(+). It catalyses the reaction gibberellin A12 aldehyde + reduced [NADPH--hemoprotein reductase] + O2 = gibberellin A12 + oxidized [NADPH--hemoprotein reductase] + H2O + 2 H(+). It functions in the pathway plant hormone biosynthesis; gibberellin biosynthesis. Functionally, catalyzes three successive oxidations of ent-kaurenoic acid giving gibberellin 12 (GA12), a key step in gibberellins (GAs) biosynthesis. GAs, which are involved many processes, including stem elongation, play a central role in plant development. The polypeptide is Ent-kaurenoic acid oxidase 1 (Hordeum vulgare (Barley)).